The following is an 891-amino-acid chain: Translation initiation factor IF-2 (891 aa).

A tr-type G domain is found at 390–559; it reads NRAPIVTIMG…LLQSDMLELK (170 aa). The interval 399-406 is G1; the sequence is GHVDHGKT. GTP is bound at residue 399-406; that stretch reads GHVDHGKT. Residues 424 to 428 form a G2 region; that stretch reads GITQS. The segment at 445–448 is G3; that stretch reads DTPG. Residues 445–449 and 499–502 contribute to the GTP site; these read DTPGH and NKID. A G4 region spans residues 499 to 502; it reads NKID. Residues 535-537 form a G5 region; that stretch reads SAT.

It belongs to the TRAFAC class translation factor GTPase superfamily. Classic translation factor GTPase family. IF-2 subfamily.

The protein localises to the cytoplasm. Functionally, one of the essential components for the initiation of protein synthesis. Protects formylmethionyl-tRNA from spontaneous hydrolysis and promotes its binding to the 30S ribosomal subunits. Also involved in the hydrolysis of GTP during the formation of the 70S ribosomal complex. This is Translation initiation factor IF-2 from Blochmanniella pennsylvanica (strain BPEN).